A 683-amino-acid chain; its full sequence is MRRCPCRGSLNEAEAGALPAAARMGLEAPRGGRRRQPGQQRPGPGAGAPAGRPEGGGPWARTEGSSLHSEPERAGLGPAPGTESPQAEFWTDGQTEPAAAGLGVETERPKQKTEPDRSSLRTHLEWSWSELETTCLWTETGTDGLWTDPHRSDLQFQPEEASPWTQPGVHGPWTELETHGSQTQPERVKSWADNLWTHQNSSSLQTHPEGACPSKEPSADGSWKELYTDGSRTQQDIEGPWTEPYTDGSQKKQDTEAARKQPGTGGFQIQQDTDGSWTQPSTDGSQTAPGTDCLLGEPEDGPLEEPEPGELLTHLYSHLKCSPLCPVPRLIITPETPEPEAQPVGPPSRVEGGSGGFSSASSFDESEDDVVAGGGGASDPEDRSGSKPWKKLKTVLKYSPFVVSFRKHYPWVQLSGHAGNFQAGEDGRILKRFCQCEQRSLEQLMKDPLRPFVPAYYGMVLQDGQTFNQMEDLLADFEGPSIMDCKMGSRTYLEEELVKARERPRPRKDMYEKMVAVDPGAPTPEEHAQGAVTKPRYMQWRETMSSTSTLGFRIEGIKKADGTCNTNFKKTQALEQVTKVLEDFVDGDHVILQKYVACLEELREALEISPFFKTHEVVGSSLLFVHDHTGLAKVWMIDFGKTVALPDHQTLSHRLPWAEGNREDGYLWGLDNMICLLQGLAQS.

Residues 1–124 (MRRCPCRGSL…PDRSSLRTHL (124 aa)) form a disordered region. The segment covering 13–22 (AEAGALPAAA) has biased composition (low complexity). The span at 44 to 58 (PGAGAPAGRPEGGGP) shows a compositional bias: gly residues. The span at 105–124 (ETERPKQKTEPDRSSLRTHL) shows a compositional bias: basic and acidic residues. Phosphoserine is present on residues Ser127 and Ser162. Residues 147–308 (TDPHRSDLQF…EDGPLEEPEP (162 aa)) form a disordered region. A compositionally biased stretch (polar residues) spans 196-206 (WTHQNSSSLQT). Basic and acidic residues predominate over residues 249–259 (SQKKQDTEAAR). Residues 267–289 (FQIQQDTDGSWTQPSTDGSQTAP) show a composition bias toward polar residues. The span at 297-308 (EPEDGPLEEPEP) shows a compositional bias: acidic residues. A Nuclear export signal motif is present at residues 324–332 (LCPVPRLII). Residues 334 to 387 (PETPEPEAQPVGPPSRVEGGSGGFSSASSFDESEDDVVAGGGGASDPEDRSGSK) form a disordered region. A Phosphothreonine modification is found at Thr336. Position 404 is a phosphoserine (Ser404). ATP is bound by residues Lys431, 471–473 (EDL), and Asp484. Substrate is bound by residues Lys486, 507 to 513 (RKDMYEK), and 534 to 541 (KPRYMQWR). Residues 509 to 517 (DMYEKMVAV) form a calmodulin-binding region. 2 residues coordinate ATP: Lys558 and Asp638. Lys641 contributes to the substrate binding site.

It belongs to the inositol phosphokinase (IPK) family. As to expression, highly expressed in pancreas, skeletal muscle, liver, placenta and weakly in kidney and brain.

It is found in the nucleus. The protein resides in the cytoplasm. It carries out the reaction 1D-myo-inositol 1,4,5-trisphosphate + ATP = 1D-myo-inositol 1,3,4,5-tetrakisphosphate + ADP + H(+). With respect to regulation, activated by calcium/calmodulin. Inhibited by high concentrations of the substrate Ins(1,2,4)P3, and allosterically activated by the product Ins(1,3,4,5)P4. Its function is as follows. Catalyzes the phosphorylation of 1D-myo-inositol 1,4,5-trisphosphate (InsP3) into 1D-myo-inositol 1,3,4,5-tetrakisphosphate and participates to the regulation of calcium homeostasis. Can phosphorylate inositol 2,4,5-triphosphate to inositol 2,4,5,6-tetraphosphate. This is Inositol-trisphosphate 3-kinase C from Homo sapiens (Human).